Reading from the N-terminus, the 131-residue chain is MRHGNGLRKLNRTSSHRLAMFRNMAVSLITHEAIKTTLPKAKELRRVIEPLITLGKEPTLANKRLAFARLRDRDAVVKLFAEIGPRYANRNGGYTRVLKMGFRQGDNAPMAFMELVDRPEVDASEADSDAE.

This sequence belongs to the bacterial ribosomal protein bL17 family. As to quaternary structure, part of the 50S ribosomal subunit. Contacts protein L32.

The chain is Large ribosomal subunit protein bL17 from Bordetella parapertussis (strain 12822 / ATCC BAA-587 / NCTC 13253).